Reading from the N-terminus, the 1284-residue chain is 1,6-alpha-glucosyltransferase (1284 aa).

The N-terminal stretch at 1–35 (MRPPNKEIPRILAFFTAFTLFGSTLALLPAPPAHA) is a signal peptide. Asp433 functions as the Nucleophile in the catalytic mechanism. Asp436 is an active-site residue. Asp495 (proton donor) is an active-site residue. CBM6 domains follow at residues 856-988 (SQYE…ITVP) and 994-1120 (GKYE…LLLS).

It belongs to the glycosyl hydrolase 31 family.

The protein localises to the secreted. It carries out the reaction 2 D-maltotetraose = alpha-isomaltosyl-(1-&gt;4)-D-maltotriose + D-maltotriose. The enzyme catalyses Transfers an alpha-D-glucosyl residue in a (1-&gt;4)-alpha-D-glucan to the primary hydroxy group of glucose, free or combined in a (1-&gt;4)-alpha-D-glucan.. With respect to regulation, strongly activated and stabilized by various divalent cations. Strongly inhibited by Cu(2+), Hg(2+) and EDTA, and moderately inhibited by Tris. In terms of biological role, glycosyltransferase involved, together with CtsY, in the conversion of alpha-1,4-glucan into a cyclic tetrasaccharide (CTS) constructed from four alpha-glucopyranosyl residues. Catalyzes an intermolecular transglucosylation in which a glucose residue at the non-reducing end of maltotetraose is transferred to the 6-OH of an other non-reducing glucose, leading to the formation of alpha-isomaltosyl-(1-&gt;4)-D-maltotriose. Has a wide substrate specificity, and acts on oligosaccharides with alpha-1,4-glucosidic linkages at the non-reducing end, except for maltose. In contrast, has little activity toward oligosaccharides with alpha-1,6-glucosidic linkages at the non-reducing end. This Sporosarcina globispora (Bacillus globisporus) protein is 1,6-alpha-glucosyltransferase.